The chain runs to 195 residues: Sec-independent protein translocase protein TatB (195 aa).

The helical transmembrane segment at 1 to 21 threads the bilayer; that stretch reads MFDIGFSELALIAVVALVVLG. The interval 130-195 is disordered; that stretch reads EPGSAQPHTP…SSTSPQEKTP (66 aa). Low complexity-rich tracts occupy residues 145 to 157 and 175 to 195; these read PVVA…APAP and TTHA…EKTP.

It belongs to the TatB family. The Tat system comprises two distinct complexes: a TatABC complex, containing multiple copies of TatA, TatB and TatC subunits, and a separate TatA complex, containing only TatA subunits. Substrates initially bind to the TatABC complex, which probably triggers association of the separate TatA complex to form the active translocon.

The protein localises to the cell inner membrane. Part of the twin-arginine translocation (Tat) system that transports large folded proteins containing a characteristic twin-arginine motif in their signal peptide across membranes. Together with TatC, TatB is part of a receptor directly interacting with Tat signal peptides. TatB may form an oligomeric binding site that transiently accommodates folded Tat precursor proteins before their translocation. This is Sec-independent protein translocase protein TatB from Xanthomonas campestris pv. campestris (strain 8004).